The following is a 445-amino-acid chain: UPF0210 protein llmg_1581 (445 aa).

It belongs to the UPF0210 family. Homodimer.

The polypeptide is UPF0210 protein llmg_1581 (Lactococcus lactis subsp. cremoris (strain MG1363)).